Reading from the N-terminus, the 21-residue chain is MKRISTTITTTITITTGNGAG.

The protein belongs to the thr operon leader peptide family.

This protein is involved in control of the biosynthesis of threonine. The chain is thr operon leader peptide from Shigella boydii serotype 18 (strain CDC 3083-94 / BS512).